The following is a 90-amino-acid chain: Major envelope protein (90 aa).

Residues 53-70 form a helical membrane-spanning segment; the sequence is AVSVVSWAVAAGLIGELI.

The protein localises to the virion membrane. Essential for membrane formation. The protein is Major envelope protein (P9) of Pseudomonas savastanoi pv. phaseolicola (Pseudomonas syringae pv. phaseolicola).